Reading from the N-terminus, the 584-residue chain is Arginine--tRNA ligase (584 aa).

Positions 126–136 match the 'HIGH' region motif; sequence PNIAKEMHVGH.

Belongs to the class-I aminoacyl-tRNA synthetase family. In terms of assembly, monomer.

Its subcellular location is the cytoplasm. It carries out the reaction tRNA(Arg) + L-arginine + ATP = L-arginyl-tRNA(Arg) + AMP + diphosphate. The sequence is that of Arginine--tRNA ligase (argS) from Synechocystis sp. (strain ATCC 27184 / PCC 6803 / Kazusa).